A 122-amino-acid chain; its full sequence is Large ribosomal subunit protein bL12 (122 aa).

This sequence belongs to the bacterial ribosomal protein bL12 family. As to quaternary structure, homodimer. Part of the ribosomal stalk of the 50S ribosomal subunit. Forms a multimeric L10(L12)X complex, where L10 forms an elongated spine to which 2 to 4 L12 dimers bind in a sequential fashion. Binds GTP-bound translation factors.

Its function is as follows. Forms part of the ribosomal stalk which helps the ribosome interact with GTP-bound translation factors. Is thus essential for accurate translation. The polypeptide is Large ribosomal subunit protein bL12 (Latilactobacillus sakei subsp. sakei (strain 23K) (Lactobacillus sakei subsp. sakei)).